A 122-amino-acid polypeptide reads, in one-letter code: Fluoride-specific ion channel FluC (122 aa).

Helical transmembrane passes span 1-21 (MYAF…RHYL), 35-55 (WAIL…SAYL), 67-87 (FLLT…LNLI), and 98-118 (FLNL…GFWL). The Na(+) site is built by G74 and T77.

Belongs to the fluoride channel Fluc/FEX (TC 1.A.43) family.

Its subcellular location is the cell inner membrane. The catalysed reaction is fluoride(in) = fluoride(out). Na(+) is not transported, but it plays an essential structural role and its presence is essential for fluoride channel function. In terms of biological role, fluoride-specific ion channel. Important for reducing fluoride concentration in the cell, thus reducing its toxicity. This is Fluoride-specific ion channel FluC from Dichelobacter nodosus (strain VCS1703A).